We begin with the raw amino-acid sequence, 229 residues long: V-type proton ATPase subunit E (229 aa).

This sequence belongs to the V-ATPase E subunit family. As to quaternary structure, V-ATPase is a heteromultimeric enzyme composed of a peripheral catalytic V1 complex (components A to H) attached to an integral membrane V0 proton pore complex (components: a, c, c', c'' and d).

Subunit of the peripheral V1 complex of vacuolar ATPase essential for assembly or catalytic function. V-ATPase is responsible for acidifying a variety of intracellular compartments in eukaryotic cells. The chain is V-type proton ATPase subunit E (VATE) from Spinacia oleracea (Spinach).